The sequence spans 122 residues: Large ribosomal subunit protein uL14c (122 aa).

It belongs to the universal ribosomal protein uL14 family. Part of the 50S ribosomal subunit.

It localises to the plastid. It is found in the chloroplast. Binds to 23S rRNA. The sequence is that of Large ribosomal subunit protein uL14c from Marchantia polymorpha (Common liverwort).